Consider the following 393-residue polypeptide: Protein shisa-9B (393 aa).

An N-terminal signal peptide occupies residues 1 to 20; the sequence is MKSTGLLLGYFLMKVLVCDA. Topologically, residues 21–131 are extracellular; it reads EGEPGKSLDG…MDQHDPTKDK (111 aa). The interval 28 to 52 is disordered; that stretch reads LDGAVTASGSNDSRDGENGLSETPH. The N-linked (GlcNAc...) asparagine glycan is linked to asparagine 38. A helical membrane pass occupies residues 132–152; that stretch reads TNLIVYIICGVVAIMALVGIF. Residues 153–393 are Cytoplasmic-facing; sequence TKLGLEKAHR…VTNSKTEVTV (241 aa). The disordered stretch occupies residues 307 to 340; sequence QKQNGHKSKSTKVHSSHPLAYGSNTIANPGRMSS. Basic residues predominate over residues 310 to 321; the sequence is NGHKSKSTKVHS.

This sequence belongs to the shisa family. SHISA9 subfamily. In terms of assembly, component of some AMPA receptors (ionotropic glutamate receptors) complex.

It localises to the cell projection. It is found in the dendritic spine membrane. The protein localises to the synapse. Regulator of short-term neuronal synaptic plasticity in the dentate gyrus. Associates with AMPA receptors (ionotropic glutamate receptors) in synaptic spines and promotes AMPA receptor desensitization at excitatory synapses. This Danio rerio (Zebrafish) protein is Protein shisa-9B (shisa9b).